The sequence spans 239 residues: Homeobox-leucine zipper protein HOX12 (239 aa).

The tract at residues 25–65 (ATSGGEQKKARQRRRRKVKPEAAAALAGESGGDEQAKKRRL) is disordered. The segment at residues 58-117 (EQAKKRRLSDEQARFLEMSFKKERKLETPRKVQLAAELGLDAKQVAVWFQNRRARHKSKL) is a DNA-binding region (homeobox). Residues 107 to 168 (QNRRARHKSK…KLAAVAAATT (62 aa)) are a coiled coil.

It belongs to the HD-ZIP homeobox family. Class I subfamily. In terms of tissue distribution, expressed in seedlings, roots, stems, leaf sheaths and panicles.

It is found in the nucleus. In terms of biological role, probable transcription factor. In Oryza sativa subsp. japonica (Rice), this protein is Homeobox-leucine zipper protein HOX12 (HOX12).